The primary structure comprises 269 residues: Protein MGF 360-15R (269 aa).

It belongs to the asfivirus MGF 360 family.

Plays a role in virus cell tropism, and may be required for efficient virus replication in macrophages. This African swine fever virus (isolate Pig/Kenya/KEN-50/1950) (ASFV) protein is Protein MGF 360-15R.